We begin with the raw amino-acid sequence, 414 residues long: CCA-adding enzyme (414 aa).

ATP is bound by residues glycine 8 and arginine 11. The CTP site is built by glycine 8 and arginine 11. Residues aspartate 21 and aspartate 23 each coordinate Mg(2+). Residues arginine 91, arginine 137, and arginine 140 each contribute to the ATP site. Residues arginine 91, arginine 137, and arginine 140 each contribute to the CTP site.

Belongs to the tRNA nucleotidyltransferase/poly(A) polymerase family. Bacterial CCA-adding enzyme type 2 subfamily. Mg(2+) is required as a cofactor.

The enzyme catalyses a tRNA precursor + 2 CTP + ATP = a tRNA with a 3' CCA end + 3 diphosphate. It carries out the reaction a tRNA with a 3' CCA end + 2 CTP + ATP = a tRNA with a 3' CCACCA end + 3 diphosphate. In terms of biological role, catalyzes the addition and repair of the essential 3'-terminal CCA sequence in tRNAs without using a nucleic acid template. Adds these three nucleotides in the order of C, C, and A to the tRNA nucleotide-73, using CTP and ATP as substrates and producing inorganic pyrophosphate. tRNA 3'-terminal CCA addition is required both for tRNA processing and repair. Also involved in tRNA surveillance by mediating tandem CCA addition to generate a CCACCA at the 3' terminus of unstable tRNAs. While stable tRNAs receive only 3'-terminal CCA, unstable tRNAs are marked with CCACCA and rapidly degraded. This chain is CCA-adding enzyme, found in Buchnera aphidicola subsp. Acyrthosiphon pisum (strain 5A).